The sequence spans 155 residues: Ribosome maturation factor RimP (155 aa).

It belongs to the RimP family.

It localises to the cytoplasm. Its function is as follows. Required for maturation of 30S ribosomal subunits. The chain is Ribosome maturation factor RimP from Synechococcus sp. (strain CC9605).